A 613-amino-acid chain; its full sequence is Dihydroxy-acid dehydratase (613 aa).

Aspartate 81 contributes to the Mg(2+) binding site. [2Fe-2S] cluster is bound at residue cysteine 122. Residues aspartate 123 and lysine 124 each coordinate Mg(2+). An N6-carboxylysine modification is found at lysine 124. Residue cysteine 195 participates in [2Fe-2S] cluster binding. Glutamate 491 is a Mg(2+) binding site. Serine 517 serves as the catalytic Proton acceptor.

The protein belongs to the IlvD/Edd family. Homodimer. [2Fe-2S] cluster is required as a cofactor. The cofactor is Mg(2+).

It catalyses the reaction (2R)-2,3-dihydroxy-3-methylbutanoate = 3-methyl-2-oxobutanoate + H2O. It carries out the reaction (2R,3R)-2,3-dihydroxy-3-methylpentanoate = (S)-3-methyl-2-oxopentanoate + H2O. It participates in amino-acid biosynthesis; L-isoleucine biosynthesis; L-isoleucine from 2-oxobutanoate: step 3/4. Its pathway is amino-acid biosynthesis; L-valine biosynthesis; L-valine from pyruvate: step 3/4. Functions in the biosynthesis of branched-chain amino acids. Catalyzes the dehydration of (2R,3R)-2,3-dihydroxy-3-methylpentanoate (2,3-dihydroxy-3-methylvalerate) into 2-oxo-3-methylpentanoate (2-oxo-3-methylvalerate) and of (2R)-2,3-dihydroxy-3-methylbutanoate (2,3-dihydroxyisovalerate) into 2-oxo-3-methylbutanoate (2-oxoisovalerate), the penultimate precursor to L-isoleucine and L-valine, respectively. The chain is Dihydroxy-acid dehydratase from Nitrobacter hamburgensis (strain DSM 10229 / NCIMB 13809 / X14).